The following is a 242-amino-acid chain: Tryptophan synthase alpha chain (242 aa).

Active-site proton acceptor residues include E32 and D43.

This sequence belongs to the TrpA family. As to quaternary structure, tetramer of two alpha and two beta chains.

The protein resides in the plastid. The protein localises to the chloroplast. It carries out the reaction (1S,2R)-1-C-(indol-3-yl)glycerol 3-phosphate + L-serine = D-glyceraldehyde 3-phosphate + L-tryptophan + H2O. Its pathway is amino-acid biosynthesis; L-tryptophan biosynthesis; L-tryptophan from chorismate: step 5/5. In terms of biological role, the alpha subunit is responsible for the aldol cleavage of indoleglycerol phosphate to indole and glyceraldehyde 3-phosphate. This Cyanidium caldarium (Red alga) protein is Tryptophan synthase alpha chain.